Consider the following 658-residue polypeptide: Glycogen debranching enzyme (658 aa).

The active-site Nucleophile is the Asp-335. Residue Glu-370 is the Proton donor of the active site.

Belongs to the glycosyl hydrolase 13 family.

The enzyme catalyses Hydrolysis of (1-&gt;6)-alpha-D-glucosidic linkages to branches with degrees of polymerization of three or four glucose residues in limit dextrin.. The protein operates within glycan degradation; glycogen degradation. In terms of biological role, removes maltotriose and maltotetraose chains that are attached by 1,6-alpha-linkage to the limit dextrin main chain, generating a debranched limit dextrin. The polypeptide is Glycogen debranching enzyme (Erwinia tasmaniensis (strain DSM 17950 / CFBP 7177 / CIP 109463 / NCPPB 4357 / Et1/99)).